Consider the following 272-residue polypeptide: TLC domain-containing protein 4 C (272 aa).

A run of 7 helical transmembrane segments spans residues 16–36 (FSNS…FIIY), 71–91 (VSMI…VESF), 103–123 (SLLM…IICY), 128–148 (LVGT…IYVA), 155–175 (CFVP…PLNM), 196–216 (FVIT…IYLV), and 233–253 (VFIT…FLLI). Residues 61-261 (KKKLEWDQRV…LIKKLYQTYL (201 aa)) form the TLC domain.

Belongs to the TLCD4 family.

It is found in the membrane. The protein is TLC domain-containing protein 4 C (tlcd4c) of Dictyostelium discoideum (Social amoeba).